A 71-amino-acid polypeptide reads, in one-letter code: Cell division protein ZapB (71 aa).

Residues 5-67 (LEVLEQLESK…RALLGKMEQM (63 aa)) adopt a coiled-coil conformation.

It belongs to the ZapB family. As to quaternary structure, homodimer. The ends of the coiled-coil dimer bind to each other, forming polymers. Interacts with FtsZ.

It localises to the cytoplasm. In terms of biological role, non-essential, abundant cell division factor that is required for proper Z-ring formation. It is recruited early to the divisome by direct interaction with FtsZ, stimulating Z-ring assembly and thereby promoting cell division earlier in the cell cycle. Its recruitment to the Z-ring requires functional FtsA or ZipA. The polypeptide is Cell division protein ZapB (Aeromonas salmonicida (strain A449)).